The primary structure comprises 555 residues: MAKYIFVTGGVASSVGKGITVASIGRLLKARGVRVSVQKLDPYINVDPGTMSPYQHGEVFVTEDGAETDLDLGHYERFIDVNLTRLSNVTTGQIYSAVIQKERRGDYLGGTIQVIPHITNEIKARIAAVARQTGAEVVIVEIGGTVGDIEGLPFLEAIRQMRKDVGRDNVLYIHVTLLPHIGATGEVKTKPTQHSVMELRRVGITADVIVCRSDYPIADEIRDKIALFADVDVEAVVPLHTVESIYEVPLVLEEAGLGNYLTLRLGLGVREPNLDDWRDLVARIKAPKRKLAIALVGKYVELHDAYISVVEALRHAGLHQGVDVDIRWISSEQIEEEGCEPLLRDVYGIVVPGGFGDRGIEGKIAAAGYAREHGVPYLGLCLGMQVATISFARHVIGAESRANSTEFDLHTPHPVIDFMPDQLDITDKGGTMRLGGYPCRLLPGTRAHAAYGVDQVVERHRHRFEFNNKYRRLLESAGLVVSGQSPDGRLVEIIELRDHPWYVGVQFHPEFRSRPERPHPLFRDFIAAAAQTFREGDQRPLPLEQNGTVGAAVKA.

Residues 1-267 (MAKYIFVTGG…GNYLTLRLGL (267 aa)) form an amidoligase domain region. Serine 13 is a CTP binding site. Serine 13 serves as a coordination point for UTP. 14–19 (SVGKGI) serves as a coordination point for ATP. Tyrosine 54 serves as a coordination point for L-glutamine. An ATP-binding site is contributed by aspartate 71. Residues aspartate 71 and glutamate 141 each coordinate Mg(2+). Residues 148 to 150 (DIE), 188 to 193 (KTKPTQ), and lysine 224 each bind CTP. Residues 188–193 (KTKPTQ) and lysine 224 each bind UTP. The Glutamine amidotransferase type-1 domain maps to 292-535 (AIALVGKYVE…IAAAAQTFRE (244 aa)). Residue glycine 354 participates in L-glutamine binding. Cysteine 381 (nucleophile; for glutamine hydrolysis) is an active-site residue. L-glutamine-binding positions include 382-385 (LGMQ), glutamate 406, and arginine 463. Residues histidine 508 and glutamate 510 contribute to the active site.

This sequence belongs to the CTP synthase family. In terms of assembly, homotetramer.

The enzyme catalyses UTP + L-glutamine + ATP + H2O = CTP + L-glutamate + ADP + phosphate + 2 H(+). It catalyses the reaction L-glutamine + H2O = L-glutamate + NH4(+). It carries out the reaction UTP + NH4(+) + ATP = CTP + ADP + phosphate + 2 H(+). It participates in pyrimidine metabolism; CTP biosynthesis via de novo pathway; CTP from UDP: step 2/2. With respect to regulation, allosterically activated by GTP, when glutamine is the substrate; GTP has no effect on the reaction when ammonia is the substrate. The allosteric effector GTP functions by stabilizing the protein conformation that binds the tetrahedral intermediate(s) formed during glutamine hydrolysis. Inhibited by the product CTP, via allosteric rather than competitive inhibition. In terms of biological role, catalyzes the ATP-dependent amination of UTP to CTP with either L-glutamine or ammonia as the source of nitrogen. Regulates intracellular CTP levels through interactions with the four ribonucleotide triphosphates. This Roseiflexus castenholzii (strain DSM 13941 / HLO8) protein is CTP synthase.